Here is a 700-residue protein sequence, read N- to C-terminus: Long chain acyl-CoA synthetase 7, peroxisomal (700 aa).

Residues 1 to 29 (MEFASPEQRRLETIRSHIDTSPTNDQSSS) are disordered. Positions 7–18 (EQRRLETIRSHI) are enriched in basic and acidic residues. The short motif at 10-18 (RLETIRSHI) is the Microbody targeting signal element. The segment covering 19 to 29 (DTSPTNDQSSS) has biased composition (polar residues). 266 to 277 (ICYTSGTTGTPK) contacts ATP. The tract at residues 526-550 (DGWLHTGDIGLWLPGGRLKIIDRKK) is fatty acid-binding. The short motif at 698–700 (SKL) is the Microbody targeting signal element.

This sequence belongs to the ATP-dependent AMP-binding enzyme family. As to quaternary structure, interacts with PEX5. The cofactor is Mg(2+). Expressed in roots, stems, leaves flowers and germinating seedling. Preferentially expressed in seeds.

The protein localises to the peroxisome. The enzyme catalyses a long-chain fatty acid + ATP + CoA = a long-chain fatty acyl-CoA + AMP + diphosphate. The catalysed reaction is decanoate + ATP + CoA = decanoyl-CoA + AMP + diphosphate. It catalyses the reaction dodecanoate + ATP + CoA = dodecanoyl-CoA + AMP + diphosphate. It carries out the reaction tetradecanoate + ATP + CoA = tetradecanoyl-CoA + AMP + diphosphate. The enzyme catalyses hexadecanoate + ATP + CoA = hexadecanoyl-CoA + AMP + diphosphate. The catalysed reaction is (9Z)-octadecenoate + ATP + CoA = (9Z)-octadecenoyl-CoA + AMP + diphosphate. It catalyses the reaction (9Z,12Z)-octadecadienoate + ATP + CoA = (9Z,12Z)-octadecadienoyl-CoA + AMP + diphosphate. It carries out the reaction (9Z,12Z,15Z)-octadecatrienoate + ATP + CoA = (9Z,12Z,15Z)-octadecatrienoyl-CoA + AMP + diphosphate. Its pathway is lipid metabolism; fatty acid metabolism. Functionally, activation of long-chain fatty acids for both synthesis of cellular lipids, and degradation via beta-oxidation. Preferentially uses palmitate, palmitoleate, oleate, linoleate and eicosenoate as substrates. Can use myristate and linolenate as substrates. Functions redundantly with LACS6 in lipid mobilization for beta-oxidation during seed germination, which is essential for postgerminative growth and seedling establishment. The protein is Long chain acyl-CoA synthetase 7, peroxisomal of Arabidopsis thaliana (Mouse-ear cress).